The following is a 718-amino-acid chain: Catalase-peroxidase (718 aa).

The tryptophyl-tyrosyl-methioninium (Trp-Tyr) (with M-245) cross-link spans 98 to 219 (WHAAGTYRMG…LAATEMGLIY (122 aa)). Residue His99 is the Proton acceptor of the active site. The tryptophyl-tyrosyl-methioninium (Tyr-Met) (with W-98) cross-link spans 219–245 (YVNPEGPQASGDPRSAAPFIRATFGNM). Residue His260 coordinates heme b.

The protein belongs to the peroxidase family. Peroxidase/catalase subfamily. Homodimer or homotetramer. Requires heme b as cofactor. In terms of processing, formation of the three residue Trp-Tyr-Met cross-link is important for the catalase, but not the peroxidase activity of the enzyme.

It catalyses the reaction H2O2 + AH2 = A + 2 H2O. It carries out the reaction 2 H2O2 = O2 + 2 H2O. In terms of biological role, bifunctional enzyme with both catalase and broad-spectrum peroxidase activity. The polypeptide is Catalase-peroxidase (Acinetobacter baumannii (strain ATCC 17978 / DSM 105126 / CIP 53.77 / LMG 1025 / NCDC KC755 / 5377)).